Consider the following 502-residue polypeptide: Bone morphogenetic protein receptor type-1B (502 aa).

The first 13 residues, 1–13 (MLLRSSGKLNVGT), serve as a signal peptide directing secretion. The disordered stretch occupies residues 1–24 (MLLRSSGKLNVGTKKEDGESTAPT). Residues 14-126 (KKEDGESTAP…DFVDGPIHHK (113 aa)) are Extracellular-facing. 5 disulfide bridges follow: C32–C53, C34–C38, C47–C71, C81–C95, and C96–C102. The helical transmembrane segment at 127-148 (ALLISVTVCSLLLVLIILFCYF) threads the bilayer. Residues 149-502 (RYKRQEARPR…KMSESQDIKL (354 aa)) are Cytoplasmic-facing. In terms of domain architecture, GS spans 174–203 (ESLRDLIEQSQSSGSGSGLPLLVQRTIAKQ). The Protein kinase domain occupies 204–494 (IQMVKQIGKG…LRVKKTLAKM (291 aa)). ATP contacts are provided by residues 210 to 218 (IGKGRYGEV) and K231. D332 acts as the Proton acceptor in catalysis.

This sequence belongs to the protein kinase superfamily. TKL Ser/Thr protein kinase family. TGFB receptor subfamily. As to quaternary structure, interacts with high affinity with GDF5; positively regulates chondrocyte differentiation. Interacts with SCUBE3. Interacts with TSC22D1/TSC-22. Interacts with TGFBR3. It depends on Mg(2+) as a cofactor. Requires Mn(2+) as cofactor. In terms of processing, autophosphorylated.

Its subcellular location is the cell membrane. It carries out the reaction L-threonyl-[receptor-protein] + ATP = O-phospho-L-threonyl-[receptor-protein] + ADP + H(+). It catalyses the reaction L-seryl-[receptor-protein] + ATP = O-phospho-L-seryl-[receptor-protein] + ADP + H(+). Its function is as follows. On ligand binding, forms a receptor complex consisting of two type II and two type I transmembrane serine/threonine kinases. Type II receptors phosphorylate and activate type I receptors which autophosphorylate, then bind and activate SMAD transcriptional regulators. Receptor for BMP7/OP-1. Receptor for GDF5. Positively regulates chondrocyte differentiation through GDF5 interaction. The chain is Bone morphogenetic protein receptor type-1B (Bmpr1b) from Mus musculus (Mouse).